The following is a 346-amino-acid chain: NADPH dehydrogenase (346 aa).

Position 23 to 26 (23 to 26 (SPMC)) interacts with FMN. A substrate-binding site is contributed by Tyr28. 2 residues coordinate FMN: Ala60 and Gln102. Residue 164 to 167 (HGAH) participates in substrate binding. FMN-binding positions include Arg215 and 307-308 (GR).

The protein belongs to the NADH:flavin oxidoreductase/NADH oxidase family. NamA subfamily. Homotetramer. FMN serves as cofactor.

The enzyme catalyses A + NADPH + H(+) = AH2 + NADP(+). In terms of biological role, catalyzes the reduction of the double bond of an array of alpha,beta-unsaturated aldehydes and ketones. It also reduces the nitro group of nitroester and nitroaromatic compounds. It could have a role in detoxification processes. This is NADPH dehydrogenase from Bacillus cytotoxicus (strain DSM 22905 / CIP 110041 / 391-98 / NVH 391-98).